The chain runs to 236 residues: Probable glutathione S-transferase GSTU6 (236 aa).

In terms of domain architecture, GST N-terminal spans 5-84 (GELKLLGVWS…YIDEVWPGGA (80 aa)). Residues Ser-15, Lys-42, Val-56, and 68–69 (ES) contribute to the glutathione site. One can recognise a GST C-terminal domain in the interval 94–228 (DPYERAVARF…KLLEFRQTLL (135 aa)).

Belongs to the GST superfamily. Tau family. In terms of tissue distribution, expressed in seedling shoots and roots.

The enzyme catalyses RX + glutathione = an S-substituted glutathione + a halide anion + H(+). In terms of biological role, conjugation of reduced glutathione to a wide number of exogenous and endogenous hydrophobic electrophiles. The sequence is that of Probable glutathione S-transferase GSTU6 (GSTU6) from Oryza sativa subsp. japonica (Rice).